We begin with the raw amino-acid sequence, 351 residues long: MSTIVTIPRSVSWKGDAIAVLNQTKLPHSTEYKTLTTIEEVWKSIVMLEVRGAPAIGIVAAFGLALVAKKYTTLHIEEFQKKFNRDCNYLGTSRPTAVNLFWAIDRMRESIQEITTIKEAQKILEEEALLIQQEDEAVCRSIGEHALSCFQDGDNILTICNAGSIATAKYGTALAPFYIGKEKGVHLHAYACETRPVLQGGRLTTWELKQAGIDVTLITDNTAAHAIQTKEINAIIVGADRIVANGDTANKIGTMNLAILAKYFGIPFYVAAPLSTFDITKQTGAEIVIEERDETEVTKIFGKQVTPVGTTVYNPAFDVTPNELITGIITERGIIRGDYKREIASLFEKTS.

Substrate contacts are provided by residues 51–53 (RGA), arginine 94, and glutamine 199. Aspartate 240 acts as the Proton donor in catalysis. 250–251 (NK) contributes to the substrate binding site.

This sequence belongs to the eIF-2B alpha/beta/delta subunits family. MtnA subfamily. As to quaternary structure, homodimer.

The catalysed reaction is 5-(methylsulfanyl)-alpha-D-ribose 1-phosphate = 5-(methylsulfanyl)-D-ribulose 1-phosphate. Its pathway is amino-acid biosynthesis; L-methionine biosynthesis via salvage pathway; L-methionine from S-methyl-5-thio-alpha-D-ribose 1-phosphate: step 1/6. Catalyzes the interconversion of methylthioribose-1-phosphate (MTR-1-P) into methylthioribulose-1-phosphate (MTRu-1-P). In Bacillus cereus (strain ATCC 10987 / NRS 248), this protein is Methylthioribose-1-phosphate isomerase.